A 291-amino-acid polypeptide reads, in one-letter code: ATP synthase gamma chain (291 aa).

The protein belongs to the ATPase gamma chain family. F-type ATPases have 2 components, CF(1) - the catalytic core - and CF(0) - the membrane proton channel. CF(1) has five subunits: alpha(3), beta(3), gamma(1), delta(1), epsilon(1). CF(0) has three main subunits: a, b and c.

The protein resides in the cell inner membrane. Produces ATP from ADP in the presence of a proton gradient across the membrane. The gamma chain is believed to be important in regulating ATPase activity and the flow of protons through the CF(0) complex. The protein is ATP synthase gamma chain of Sulfurihydrogenibium sp. (strain YO3AOP1).